Here is a 509-residue protein sequence, read N- to C-terminus: Lanosterol 14-alpha demethylase (509 aa).

A helical transmembrane segment spans residues 30 to 50 (GNLLSMLLIACAFTLSLVYLI). A heme-binding site is contributed by Cys455.

The protein belongs to the cytochrome P450 family. Heme is required as a cofactor. Ubiquitinated by MARCHF6, leading to proteasomal degradation. Ubiquitously expressed with highest levels in testis, ovary, adrenal, prostate, liver, kidney and lung.

The protein resides in the endoplasmic reticulum membrane. It is found in the microsome membrane. The catalysed reaction is a 14alpha-methyl steroid + 3 reduced [NADPH--hemoprotein reductase] + 3 O2 = a Delta(14) steroid + formate + 3 oxidized [NADPH--hemoprotein reductase] + 4 H2O + 4 H(+). It catalyses the reaction lanosterol + 3 reduced [NADPH--hemoprotein reductase] + 3 O2 = 4,4-dimethyl-5alpha-cholesta-8,14,24-trien-3beta-ol + formate + 3 oxidized [NADPH--hemoprotein reductase] + 4 H2O + 4 H(+). It carries out the reaction 24,25-dihydrolanosterol + 3 reduced [NADPH--hemoprotein reductase] + 3 O2 = 4,4-dimethyl-8,14-cholestadien-3beta-ol + formate + 3 oxidized [NADPH--hemoprotein reductase] + 4 H2O + 4 H(+). The enzyme catalyses a 14alpha-methyl steroid + reduced [NADPH--hemoprotein reductase] + O2 = a 14alpha-hydroxymethyl steroid + oxidized [NADPH--hemoprotein reductase] + H2O + H(+). The catalysed reaction is a 14alpha-hydroxymethyl steroid + reduced [NADPH--hemoprotein reductase] + O2 = a 14alpha-formyl steroid + oxidized [NADPH--hemoprotein reductase] + 2 H2O + H(+). It catalyses the reaction a 14alpha-formyl steroid + reduced [NADPH--hemoprotein reductase] + O2 = a Delta(14) steroid + formate + oxidized [NADPH--hemoprotein reductase] + H2O + 2 H(+). It carries out the reaction lanosterol + reduced [NADPH--hemoprotein reductase] + O2 = 32-hydroxylanosterol + oxidized [NADPH--hemoprotein reductase] + H2O + H(+). The enzyme catalyses 32-hydroxylanosterol + reduced [NADPH--hemoprotein reductase] + O2 = 32-oxolanosterol + oxidized [NADPH--hemoprotein reductase] + 2 H2O + H(+). The catalysed reaction is 32-oxolanosterol + reduced [NADPH--hemoprotein reductase] + O2 = 4,4-dimethyl-5alpha-cholesta-8,14,24-trien-3beta-ol + formate + oxidized [NADPH--hemoprotein reductase] + H2O + 2 H(+). It catalyses the reaction 24,25-dihydrolanosterol + reduced [NADPH--hemoprotein reductase] + O2 = 32-hydroxy-24,25-dihydrolanosterol + oxidized [NADPH--hemoprotein reductase] + H2O + H(+). It carries out the reaction 32-hydroxy-24,25-dihydrolanosterol + reduced [NADPH--hemoprotein reductase] + O2 = 32-oxo-24,25-dihydrolanosterol + oxidized [NADPH--hemoprotein reductase] + 2 H2O + H(+). The enzyme catalyses 32-oxo-24,25-dihydrolanosterol + reduced [NADPH--hemoprotein reductase] + O2 = 4,4-dimethyl-8,14-cholestadien-3beta-ol + formate + oxidized [NADPH--hemoprotein reductase] + H2O + 2 H(+). It functions in the pathway steroid biosynthesis; zymosterol biosynthesis; zymosterol from lanosterol: step 1/6. Inhibited by azalanstat. Inhibited by azole antifungal agents ketoconazole, itraconazole and fluconazole. Its function is as follows. Sterol 14alpha-demethylase that plays a critical role in the cholesterol biosynthesis pathway, being cholesterol the major sterol component in mammalian membranes as well as a precursor for bile acid and steroid hormone synthesis. Cytochrome P450 monooxygenase that catalyzes the three-step oxidative removal of the 14alpha-methyl group (C-32) of sterols such as lanosterol (lanosta-8,24-dien-3beta-ol) and 24,25-dihydrolanosterol (DHL) in the form of formate, and converts the sterols to 4,4-dimethyl-5alpha-cholesta-8,14,24-trien-3beta-ol and 4,4-dimethyl-8,14-cholestadien-3beta-ol, respectively, which are intermediates of cholesterol biosynthesis. Can also demethylate substrates not intrinsic to mammals, such as eburicol (24-methylene-24,25-dihydrolanosterol), but at a lower rate than DHL. In Homo sapiens (Human), this protein is Lanosterol 14-alpha demethylase.